Here is a 962-residue protein sequence, read N- to C-terminus: UvrABC system protein A (962 aa).

An ATP-binding site is contributed by 38 to 45 (GISGSGKS). 2 ABC transporter domains span residues 319-597 (WSKS…PDSL) and 617-944 (PSGR…RFLR). 649 to 656 (GVSGSGKS) contributes to the ATP binding site. The C4-type zinc-finger motif lies at 748 to 774 (CEACGGDGIIKIEMHFLADVYVPCEVC).

It belongs to the ABC transporter superfamily. UvrA family. In terms of assembly, forms a heterotetramer with UvrB during the search for lesions.

The protein localises to the cytoplasm. In terms of biological role, the UvrABC repair system catalyzes the recognition and processing of DNA lesions. UvrA is an ATPase and a DNA-binding protein. A damage recognition complex composed of 2 UvrA and 2 UvrB subunits scans DNA for abnormalities. When the presence of a lesion has been verified by UvrB, the UvrA molecules dissociate. The polypeptide is UvrABC system protein A (Methanothermobacter thermautotrophicus (strain ATCC 29096 / DSM 1053 / JCM 10044 / NBRC 100330 / Delta H) (Methanobacterium thermoautotrophicum)).